Here is an 88-residue protein sequence, read N- to C-terminus: Apolipoprotein C-I (88 aa).

The signal sequence occupies residues 1–26 (MRLFLSLPVLVVVLAMVLEGPAPTQA).

It belongs to the apolipoprotein C1 family.

It is found in the secreted. Functionally, inhibitor of lipoprotein binding to the low density lipoprotein (LDL) receptor, LDL receptor-related protein, and very low density lipoprotein (VLDL) receptor. Associates with high density lipoproteins (HDL) and the triacylglycerol-rich lipoproteins in the plasma and makes up about 10% of the protein of the VLDL and 2% of that of HDL. Appears to interfere directly with fatty acid uptake and is also the major plasma inhibitor of cholesteryl ester transfer protein (CETP). Binds free fatty acids and reduces their intracellular esterification. Modulates the interaction of APOE with beta-migrating VLDL and inhibits binding of beta-VLDL to the LDL receptor-related protein. In Leptonychotes weddellii (Weddell seal), this protein is Apolipoprotein C-I (APOC1).